A 467-amino-acid chain; its full sequence is Probable Xaa-Pro aminopeptidase SMAC_04549 (467 aa).

Mn(2+)-binding residues include Asp263, Asp274, Glu397, and Glu437.

The protein belongs to the peptidase M24B family. Requires Mn(2+) as cofactor.

It carries out the reaction Release of any N-terminal amino acid, including proline, that is linked to proline, even from a dipeptide or tripeptide.. Its function is as follows. Catalyzes the removal of a penultimate prolyl residue from the N-termini of peptides. The protein is Probable Xaa-Pro aminopeptidase SMAC_04549 of Sordaria macrospora (strain ATCC MYA-333 / DSM 997 / K(L3346) / K-hell).